The primary structure comprises 37 residues: Cytochrome b6-f complex subunit 5 (37 aa).

Residues 5 to 25 (LLFGIVLGLIPVTLVGLFVAA) form a helical membrane-spanning segment.

The protein belongs to the PetG family. As to quaternary structure, the 4 large subunits of the cytochrome b6-f complex are cytochrome b6, subunit IV (17 kDa polypeptide, PetD), cytochrome f and the Rieske protein, while the 4 small subunits are PetG, PetL, PetM and PetN. The complex functions as a dimer.

The protein resides in the plastid. Its subcellular location is the chloroplast thylakoid membrane. Component of the cytochrome b6-f complex, which mediates electron transfer between photosystem II (PSII) and photosystem I (PSI), cyclic electron flow around PSI, and state transitions. PetG is required for either the stability or assembly of the cytochrome b6-f complex. The polypeptide is Cytochrome b6-f complex subunit 5 (Rhodomonas salina (Cryptomonas salina)).